The following is a 69-amino-acid chain: AKDGYLVNKSTGCKYECFWLGKNEFCDKECKAKNQGGSYGYCYSFACWCEGLPESTSTYPLPNKSCGRK.

A signal peptide is located at residue Ala1. The LCN-type CS-alpha/beta domain maps to 2–67; sequence KDGYLVNKST…TYPLPNKSCG (66 aa). Cystine bridges form between Cys13–Cys66, Cys17–Cys42, Cys26–Cys47, and Cys30–Cys49. The residue at position 66 (Cys66) is a Cysteine amide. The propeptide occupies 67–69; it reads GRK.

This sequence belongs to the long (4 C-C) scorpion toxin superfamily. Sodium channel inhibitor family. Beta subfamily. In terms of tissue distribution, expressed by the venom gland.

Its subcellular location is the secreted. Functionally, beta toxins bind voltage-independently at site-4 of sodium channels (Nav) and shift the voltage of activation toward more negative potentials thereby affecting sodium channel activation and promoting spontaneous and repetitive firing. This Centruroides exilicauda (Bark scorpion) protein is Neurotoxin Cex3.